Here is a 645-residue protein sequence, read N- to C-terminus: DNA mismatch repair protein MutL (645 aa).

The protein belongs to the DNA mismatch repair MutL/HexB family.

Functionally, this protein is involved in the repair of mismatches in DNA. It is required for dam-dependent methyl-directed DNA mismatch repair. May act as a 'molecular matchmaker', a protein that promotes the formation of a stable complex between two or more DNA-binding proteins in an ATP-dependent manner without itself being part of a final effector complex. This chain is DNA mismatch repair protein MutL, found in Geobacillus thermodenitrificans (strain NG80-2).